A 273-amino-acid polypeptide reads, in one-letter code: Putative phosphoenolpyruvate synthase regulatory protein (273 aa).

154 to 161 (GVSRSGKT) provides a ligand contact to ADP.

The protein belongs to the pyruvate, phosphate/water dikinase regulatory protein family. PSRP subfamily.

It carries out the reaction [pyruvate, water dikinase] + ADP = [pyruvate, water dikinase]-phosphate + AMP + H(+). The catalysed reaction is [pyruvate, water dikinase]-phosphate + phosphate + H(+) = [pyruvate, water dikinase] + diphosphate. In terms of biological role, bifunctional serine/threonine kinase and phosphorylase involved in the regulation of the phosphoenolpyruvate synthase (PEPS) by catalyzing its phosphorylation/dephosphorylation. This chain is Putative phosphoenolpyruvate synthase regulatory protein, found in Neisseria meningitidis serogroup C (strain 053442).